The chain runs to 358 residues: Serine/threonine-protein phosphatase 2A activator 2 (358 aa).

The protein belongs to the PTPA-type PPIase family.

It is found in the cytoplasm. It carries out the reaction [protein]-peptidylproline (omega=180) = [protein]-peptidylproline (omega=0). PPIases accelerate the folding of proteins. It catalyzes the cis-trans isomerization of proline imidic peptide bonds in oligopeptides. Acts as a regulatory subunit for PP2A-like phosphatases modulating their activity or substrate specificity, probably by inducing a conformational change in the catalytic subunit, a direct target of the PPIase. Can reactivate inactive phosphatase PP2A-phosphatase methylesterase complexes (PP2Ai) in presence of ATP and Mg(2+) by dissociating the inactive form from the complex. The protein is Serine/threonine-protein phosphatase 2A activator 2 (RRD2) of Candida glabrata (strain ATCC 2001 / BCRC 20586 / JCM 3761 / NBRC 0622 / NRRL Y-65 / CBS 138) (Yeast).